A 111-amino-acid chain; its full sequence is Cytochrome c2 (111 aa).

Heme c contacts are provided by Cys-14, Cys-17, His-18, and Met-83.

Belongs to the cytochrome c family. Post-translationally, binds 1 heme c group covalently per subunit.

Cytochrome c2 is found mainly in purple, non-sulfur, photosynthetic bacteria where it functions as the electron donor to the oxidized bacteriochlorophyll in the photophosphorylation pathway. However, it may also have a role in the respiratory chain and is found in some non-photosynthetic bacteria. The sequence is that of Cytochrome c2 from Agrobacterium tumefaciens (strain II Chrys).